A 471-amino-acid chain; its full sequence is Putative multidrug resistance protein MdtD (471 aa).

The Periplasmic portion of the chain corresponds to 1 to 11 (MTDLPDSTRWQ). The helical transmembrane segment at 12–32 (LWIVAFGFFMQSLDTTIVNTA) threads the bilayer. Over 33-48 (LPSMAQSLGESPLHMH) the chain is Cytoplasmic. A helical transmembrane segment spans residues 49-69 (MVIVSYVLTVAVMLPASGWLA). At 70 to 76 (DKVGVRN) the chain is on the periplasmic side. A helical membrane pass occupies residues 77-97 (IFFTAIVLFTLGSLFCALSGT). Topologically, residues 98–101 (LNEL) are cytoplasmic. The helical transmembrane segment at 102 to 124 (LLARALQGVGGAMMVPVGRLTVM) threads the bilayer. The Periplasmic segment spans residues 125–137 (KIVPREQYMAAMT). Residues 138 to 158 (FVTLPGQVGPLLGPALGGLLV) form a helical membrane-spanning segment. At 159–164 (EYASWH) the chain is on the cytoplasmic side. Residues 165 to 185 (WIFLINIPVGIIGAIATLMLM) form a helical membrane-spanning segment. At 186-196 (PNYTMQTRRFD) the chain is on the periplasmic side. The chain crosses the membrane as a helical span at residues 197-217 (LSGFLLLAVGMAVLTLALDGS). Residues 218 to 224 (KGTGLSP) are Cytoplasmic-facing. A helical transmembrane segment spans residues 225-245 (LTIDGLVAVGVVALVLYLLHA). Residues 246 to 262 (RNNNRALFSLKLFRTRT) lie on the Periplasmic side of the membrane. Residues 263-283 (FSLGLAGSFAGRIGSGMLPFM) traverse the membrane as a helical segment. Over 284–285 (TP) the chain is Cytoplasmic. Residues 286–306 (VFLQIGLGFSPFHAGLMMIPM) traverse the membrane as a helical segment. At 307 to 341 (VLGSMGMKRIVVQVVNRFGYRRVLVATTLGLSLVT) the chain is on the periplasmic side. Residues 342-362 (LLFMTTALLGWYYVLPFVLFL) form a helical membrane-spanning segment. Residues 363–395 (QGMVNSTRFSSMNTLTLKDLPDNLASSGNSLLS) lie on the Cytoplasmic side of the membrane. The helical transmembrane segment at 396–416 (MIMQLSMSIGVTIAGLLLGLF) threads the bilayer. The Periplasmic segment spans residues 417–430 (GSQHVSIDSGTTQT). Residues 431 to 451 (VFMYTWLSMALIIALPAFIFA) form a helical membrane-spanning segment. The Cytoplasmic segment spans residues 452-471 (RVPNDTHQNVAISRRKRSAQ).

The protein belongs to the major facilitator superfamily. TCR/Tet family.

Its subcellular location is the cell inner membrane. In Escherichia coli (strain SE11), this protein is Putative multidrug resistance protein MdtD.